Consider the following 73-residue polypeptide: Large ribosomal subunit protein bL31 (73 aa).

This sequence belongs to the bacterial ribosomal protein bL31 family. Type A subfamily. Part of the 50S ribosomal subunit.

Its function is as follows. Binds the 23S rRNA. The protein is Large ribosomal subunit protein bL31 of Bartonella henselae (strain ATCC 49882 / DSM 28221 / CCUG 30454 / Houston 1) (Rochalimaea henselae).